A 215-amino-acid chain; its full sequence is N-(5'-phosphoribosyl)anthranilate isomerase (215 aa).

Belongs to the TrpF family.

It carries out the reaction N-(5-phospho-beta-D-ribosyl)anthranilate = 1-(2-carboxyphenylamino)-1-deoxy-D-ribulose 5-phosphate. Its pathway is amino-acid biosynthesis; L-tryptophan biosynthesis; L-tryptophan from chorismate: step 3/5. The polypeptide is N-(5'-phosphoribosyl)anthranilate isomerase (Parvibaculum lavamentivorans (strain DS-1 / DSM 13023 / NCIMB 13966)).